Reading from the N-terminus, the 242-residue chain is ATP synthase subunit a (242 aa).

6 consecutive transmembrane segments (helical) span residues 29 to 49 (SSIY…LAFY), 84 to 104 (FIPL…LGMT), 114 to 134 (IIVT…VGFV), 140 to 160 (FLTL…MIVI), 189 to 209 (VIAG…IPLM), and 210 to 230 (MILI…FTIL).

Belongs to the ATPase A chain family. As to quaternary structure, F-type ATPases have 2 components, CF(1) - the catalytic core - and CF(0) - the membrane proton channel. CF(1) has five subunits: alpha(3), beta(3), gamma(1), delta(1), epsilon(1). CF(0) has three main subunits: a(1), b(2) and c(9-12). The alpha and beta chains form an alternating ring which encloses part of the gamma chain. CF(1) is attached to CF(0) by a central stalk formed by the gamma and epsilon chains, while a peripheral stalk is formed by the delta and b chains.

Its subcellular location is the cell inner membrane. In terms of biological role, key component of the proton channel; it plays a direct role in the translocation of protons across the membrane. The protein is ATP synthase subunit a of Rickettsia massiliae (strain Mtu5).